The chain runs to 291 residues: Acidic endochitinase (291 aa).

Residues 1 to 22 (MIKYSFLLTALVLFLRALKLEA) form the signal peptide. A GH18 domain is found at 23-291 (GDIVIYWGQN…GYSSAIKANV (269 aa)). Cystine bridges form between cysteine 42–cysteine 89 and cysteine 72–cysteine 79. Catalysis depends on glutamate 149, which acts as the Proton donor. A disulfide bond links cysteine 180 and cysteine 209.

Belongs to the glycosyl hydrolase 18 family. Chitinase class II subfamily.

The protein resides in the secreted. The protein localises to the cell wall. It carries out the reaction Random endo-hydrolysis of N-acetyl-beta-D-glucosaminide (1-&gt;4)-beta-linkages in chitin and chitodextrins.. This protein functions as a defense against chitin containing fungal pathogens. The protein is Acidic endochitinase of Nicotiana tabacum (Common tobacco).